The chain runs to 434 residues: Enolase (434 aa).

A (2R)-2-phosphoglycerate-binding site is contributed by Gln-163. Glu-205 serves as the catalytic Proton donor. Residues Asp-243, Glu-291, and Asp-318 each contribute to the Mg(2+) site. (2R)-2-phosphoglycerate contacts are provided by Lys-343, Arg-372, Ser-373, and Lys-394. Lys-343 (proton acceptor) is an active-site residue.

The protein belongs to the enolase family. The cofactor is Mg(2+).

Its subcellular location is the cytoplasm. It is found in the secreted. The protein localises to the cell surface. The catalysed reaction is (2R)-2-phosphoglycerate = phosphoenolpyruvate + H2O. It functions in the pathway carbohydrate degradation; glycolysis; pyruvate from D-glyceraldehyde 3-phosphate: step 4/5. In terms of biological role, catalyzes the reversible conversion of 2-phosphoglycerate (2-PG) into phosphoenolpyruvate (PEP). It is essential for the degradation of carbohydrates via glycolysis. This is Enolase from Fusobacterium nucleatum subsp. nucleatum (strain ATCC 25586 / DSM 15643 / BCRC 10681 / CIP 101130 / JCM 8532 / KCTC 2640 / LMG 13131 / VPI 4355).